A 139-amino-acid polypeptide reads, in one-letter code: D-ribose pyranase (139 aa).

The active-site Proton donor is histidine 20. Residues aspartate 28, histidine 106, and 128-130 (YAN) contribute to the substrate site.

The protein belongs to the RbsD / FucU family. RbsD subfamily. As to quaternary structure, homodecamer.

It localises to the cytoplasm. The catalysed reaction is beta-D-ribopyranose = beta-D-ribofuranose. It functions in the pathway carbohydrate metabolism; D-ribose degradation; D-ribose 5-phosphate from beta-D-ribopyranose: step 1/2. Its function is as follows. Catalyzes the interconversion of beta-pyran and beta-furan forms of D-ribose. The polypeptide is D-ribose pyranase (Salmonella paratyphi B (strain ATCC BAA-1250 / SPB7)).